Consider the following 618-residue polypeptide: MSASNKGGYKTPRKENLMSIENLTNSEEESEDLNTAMVGNAVESQPKVTSRRSTRRPSPTKKYQAYQKESNGKGQEERIVVNYVEMSDERSSDAEDQEEEESIEESENAARPAAKDLHLIQSEYNVAGTSMFGFNTPKKRDAMALAALNATPCTPKTPKTPRLGVKTPDTKRKKSMDQPKTPAHVRTRVKKQIAKIVADSDEDFSGDESDFRPSDEESSSSSSSSDAGNSSDNDAADDEPKTPSRARRAIVVPVLPKTPSAARLRQSARAKKSNEFVPESDGYFHSHASSKILTSDHTLDRLKNPRLAADRVFSLLSEIKTSAEHEGSINAIMEEYRSYFPKWMCILNEGFNILLYGLGSKHQLLQSFHREVLHKQTVLVVNGFFPSLTIKDMLDSITSDILDAGISPANPHEAVDMIEEEFALIPETHLFLIVHNLDGAMLRNVKAQAILSRLARIPNIHLLASIDHINTPLLWDQGKLCSFNFSWWDCTTMLPYTNETAFENSLLVQNSGELALSSMRSVFSSLTTNSRGIYMLIVKYQLKNKGNATYQGMPFRDLYSSCREAFLVSSDLALRAQLTEFLDHKLVKSKRSVDGSEQLTIPIDGALLQQFLEEQEKK.

Disordered stretches follow at residues 1 to 116 and 149 to 274; these read MSAS…AAKD and NATP…KKSN. The residue at position 24 (Thr24) is a Phosphothreonine. A phosphoserine mark is found at Ser26 and Ser30. Positions 49 to 59 are enriched in basic residues; that stretch reads TSRRSTRRPSP. Basic and acidic residues predominate over residues 70–79; it reads SNGKGQEERI. Ser87, Ser91, and Ser92 each carry phosphoserine. Residues 94 to 107 are compositionally biased toward acidic residues; it reads AEDQEEEESIEESE. Phosphothreonine is present on residues Thr151, Thr154, Thr157, Thr160, Thr167, Thr170, and Thr181. Residues 151–161 are compositionally biased toward low complexity; sequence TPCTPKTPKTP. Basic residues predominate over residues 183–193; it reads AHVRTRVKKQI. Residues 199 to 208 show a composition bias toward acidic residues; the sequence is DSDEDFSGDE. The span at 219 to 233 shows a compositional bias: low complexity; sequence SSSSSSSDAGNSSDN. Thr258 is subject to Phosphothreonine. A Phosphoserine modification is found at Ser260.

It belongs to the ORC2 family. As to quaternary structure, ORC is composed of six subunits. Interacts with Mcm10. Interacts with CG9890. Interaction between the TREX-2/AMEX complex and the ORC complex is required for ORC localization to mRNPs, and consequently mRNA export.

The protein resides in the nucleus. The protein localises to the chromosome. It is found in the centromere. Its function is as follows. Component of the origin recognition complex (ORC) that binds origins of replication. DNA-binding is ATP-dependent, however specific DNA sequences that define origins of replication have not been identified so far. ORC is required to assemble the pre-replication complex necessary to initiate DNA replication. As part of the ORC complex, might also have a role in mRNA export. The polypeptide is Origin recognition complex subunit 2 (Orc2) (Drosophila melanogaster (Fruit fly)).